The following is a 285-amino-acid chain: GTP-binding protein 8 (285 aa).

The EngB-type G domain occupies 110-283 (RQPEVCFIGR…KCFIADITGS (174 aa)). GTP-binding positions include 118–125 (GRSNVGKS), 147–151 (GHTKK), 165–168 (DMPG), 227–230 (TKID), and 262–264 (ISA). Positions 125 and 149 each coordinate Mg(2+).

This sequence belongs to the TRAFAC class TrmE-Era-EngA-EngB-Septin-like GTPase superfamily. EngB GTPase family. Mg(2+) serves as cofactor.

This Rattus norvegicus (Rat) protein is GTP-binding protein 8 (Gtpbp8).